The chain runs to 627 residues: Plasmepsin IX (627 aa).

At Met-1 to Gln-13 the chain is on the cytoplasmic side. A helical; Signal-anchor for type II membrane protein transmembrane segment spans residues Phe-14–Ile-34. Residues Asn-35–Leu-627 are Lumenal-facing. In terms of domain architecture, Peptidase A1 spans Tyr-228–Ala-605. Catalysis depends on residues Asp-246 and Asp-495.

It belongs to the peptidase A1 family. In terms of processing, autocleaved into a p55 mature form.

Its subcellular location is the membrane. The protein localises to the cytoplasmic vesicle. It localises to the secretory vesicle. It is found in the rhoptry. Its activity is regulated as follows. Inhibited by small molecule 49c. Inhibited by small molecule WM382. Its function is as follows. During the asexual blood stage, initiates the proteolytic maturation of several rhoptry proteins and thus, is required for merozoite invasion of host erythrocytes and probably the subsequent development of the ring-stage. Cleaves rhoptry associated protein 1 RAP1 and apical sushi protein ASP during schizont maturation. Also cleaves rhoptry protein RON3. This is Plasmepsin IX from Plasmodium falciparum (isolate 3D7).